The sequence spans 174 residues: Centrosomal protein 20 (174 aa).

A necessary and sufficient for homooligomerization and localization to centrosomes and pericentriolar satellites region spans residues 1-104 (MATVTELKAV…AFEESKDNSI (104 aa)). The region spanning 49-81 (ENLLINELIREYLEFNKYKYTASVLIAESGQPV) is the LisH domain. Positions 136–174 (TKHLSWKPSRRPDDDHVRKDTGPRTTTEELPAAAQAVSR) are disordered. Ser-144 carries the post-translational modification Phosphoserine. Over residues 145-157 (RRPDDDHVRKDTG) the composition is skewed to basic and acidic residues.

It belongs to the CEP43 family. As to quaternary structure, homooligomer; probably required for localization to centrosomes. Forms a complex with KIAA0753/OFIP and OFD1; within this complex may stabilize the interaction between OFD1 and KIAA0753/OFIP. Interacts with PCM1; this interaction may be mediated by KIAA0753/OFIP.

It is found in the cytoplasm. It localises to the cytoskeleton. Its subcellular location is the microtubule organizing center. The protein resides in the centrosome. The protein localises to the centriole. It is found in the cell projection. It localises to the cilium. Its subcellular location is the cilium basal body. The protein resides in the cytoplasmic granule. The protein localises to the centriolar satellite. Involved in the biogenesis of cilia. Required for the recruitment of PLK1 to centrosomes and S phase progression. The polypeptide is Centrosomal protein 20 (Mus musculus (Mouse)).